The sequence spans 216 residues: Octanoyltransferase (216 aa).

The 180-residue stretch at 32-211 (QEASEMLWFL…RFPYFLEALQ (180 aa)) folds into the BPL/LPL catalytic domain. Substrate contacts are provided by residues 71 to 78 (RGGRYTYH), 142 to 144 (AIG), and 155 to 157 (GFS). Cys173 (acyl-thioester intermediate) is an active-site residue.

It belongs to the LipB family.

The protein resides in the cytoplasm. The catalysed reaction is octanoyl-[ACP] + L-lysyl-[protein] = N(6)-octanoyl-L-lysyl-[protein] + holo-[ACP] + H(+). The protein operates within protein modification; protein lipoylation via endogenous pathway; protein N(6)-(lipoyl)lysine from octanoyl-[acyl-carrier-protein]: step 1/2. Its function is as follows. Catalyzes the transfer of endogenously produced octanoic acid from octanoyl-acyl-carrier-protein onto the lipoyl domains of lipoate-dependent enzymes. Lipoyl-ACP can also act as a substrate although octanoyl-ACP is likely to be the physiological substrate. The chain is Octanoyltransferase from Zymomonas mobilis subsp. mobilis (strain ATCC 31821 / ZM4 / CP4).